Here is a 102-residue protein sequence, read N- to C-terminus: Small ribosomal subunit protein uS10 (102 aa).

This sequence belongs to the universal ribosomal protein uS10 family. In terms of assembly, part of the 30S ribosomal subunit.

Its function is as follows. Involved in the binding of tRNA to the ribosomes. The polypeptide is Small ribosomal subunit protein uS10 (Pyrococcus horikoshii (strain ATCC 700860 / DSM 12428 / JCM 9974 / NBRC 100139 / OT-3)).